The following is a 764-amino-acid chain: Plasma membrane fusion protein prm-1 (764 aa).

Over 1 to 61 the chain is Extracellular; sequence MVYNEKNGGG…YLGLRARLSQ (61 aa). The helical transmembrane segment at 62-82 threads the bilayer; the sequence is LWFNRWTILLILVLIRVIILT. Residues 83-149 are Cytoplasmic-facing; that stretch reads ANLKENLGDA…LKMILTGVQA (67 aa). Residues 150 to 170 form a helical membrane-spanning segment; it reads IIMFVINMYIGTFACLVAAFI. The Extracellular portion of the chain corresponds to 171–334; the sequence is HGGLHVATAV…SLITLVYKAK (164 aa). N-linked (GlcNAc...) asparagine glycans are attached at residues Asn271 and Asn315. The chain crosses the membrane as a helical span at residues 335 to 355; sequence IAFLVVIIILALLAIFVMGYI. Topologically, residues 356 to 424 are cytoplasmic; it reads EYRGFKRERE…AFAYATSLPA (69 aa). A helical membrane pass occupies residues 425 to 445; the sequence is LFVLSLAVAGMLSCLFQWVLL. Residues 446-624 lie on the Extracellular side of the membrane; that stretch reads RQIEKKAPEL…NGVIQEALIT (179 aa). N-linked (GlcNAc...) asparagine glycosylation is found at Asn479, Asn508, and Asn527. The helical transmembrane segment at 625–645 threads the bilayer; the sequence is LGLFLTYVIVVLIGVMGALIG. Over 646-764 the chain is Cytoplasmic; the sequence is WATPGKTRGE…EKVPGYFTPI (119 aa). 2 disordered regions span residues 653-701 and 735-754; these read RGEG…GGGG and HQRT…PHGD.

The protein belongs to the PRM1 family.

It localises to the cell membrane. Functionally, involved in cell fusion during mating by stabilizing the plasma membrane fusion event. This is Plasma membrane fusion protein prm-1 (prm-1) from Neurospora crassa (strain ATCC 24698 / 74-OR23-1A / CBS 708.71 / DSM 1257 / FGSC 987).